Here is a 420-residue protein sequence, read N- to C-terminus: MGNTLFFISLSLIWVMLLYHMFLMQGGFRHYMTFERNIPKWRENMKELPKVSVLIPAHNEEVVIRQTLKAMVNLYYPKDRLEIIVVNDNSSDRTGDIVNEFSEKYDFIKMVITKPPNAGKGKSSALNSGFAESNGDVICVYDADNTPEKMAVYYLVLGLMNDEKAGAVVGKFRVINAAKTLLTRFINIETICFQWMAQGGRWKWFKIATIPGTNFAIRRSIIEKLGGWDDKALAEDTELTIRVYNLGYHIRFFPAAITWEQEPETWKVWWRQRTRWARGNQYVVLKFLAQFFKLKRKRIIFDLFYFFFTYFLFFFGVIMSNAIFVVNLFYDLHLSVGFLAMILWILAFFLFMTEVMITLSIEKTEMNKQNFFIVFLMYFTYSQAWIVLVIYSLFVEIKHRLFKQEVKWYKTERYNQHKSG.

Transmembrane regions (helical) follow at residues 4-24 (TLFF…MFLM), 299-319 (IIFD…GVIM), 332-352 (LHLS…FLFM), and 371-391 (FFIV…LVIY).

This sequence belongs to the glycosyltransferase 2 family.

The protein resides in the cell membrane. This Bacillus subtilis (strain 168) protein is Probable glycosyltransferase YdaM (ydaM).